Here is a 467-residue protein sequence, read N- to C-terminus: tRNA modification GTPase MnmE (467 aa).

(6S)-5-formyl-5,6,7,8-tetrahydrofolate contacts are provided by arginine 25, glutamate 87, and lysine 130. The region spanning 226–389 is the TrmE-type G domain; the sequence is GLSVVLAGQP…LRGELLRIAG (164 aa). Asparagine 236 provides a ligand contact to K(+). GTP-binding positions include 236–241, 255–261, and 280–283; these read NVGKSS, TPIAGTT, and DTAG. Serine 240 serves as a coordination point for Mg(2+). K(+)-binding residues include threonine 255, isoleucine 257, and threonine 260. Threonine 261 contacts Mg(2+). Lysine 467 contacts (6S)-5-formyl-5,6,7,8-tetrahydrofolate.

This sequence belongs to the TRAFAC class TrmE-Era-EngA-EngB-Septin-like GTPase superfamily. TrmE GTPase family. Homodimer. Heterotetramer of two MnmE and two MnmG subunits. The cofactor is K(+).

It localises to the cytoplasm. Its function is as follows. Exhibits a very high intrinsic GTPase hydrolysis rate. Involved in the addition of a carboxymethylaminomethyl (cmnm) group at the wobble position (U34) of certain tRNAs, forming tRNA-cmnm(5)s(2)U34. The sequence is that of tRNA modification GTPase MnmE from Burkholderia mallei (strain NCTC 10247).